A 406-amino-acid polypeptide reads, in one-letter code: Phosphopentomutase (406 aa).

Positions 10, 305, 310, 346, 347, and 358 each coordinate Mn(2+).

It belongs to the phosphopentomutase family. Mn(2+) serves as cofactor.

It localises to the cytoplasm. The catalysed reaction is 2-deoxy-alpha-D-ribose 1-phosphate = 2-deoxy-D-ribose 5-phosphate. The enzyme catalyses alpha-D-ribose 1-phosphate = D-ribose 5-phosphate. Its pathway is carbohydrate degradation; 2-deoxy-D-ribose 1-phosphate degradation; D-glyceraldehyde 3-phosphate and acetaldehyde from 2-deoxy-alpha-D-ribose 1-phosphate: step 1/2. In terms of biological role, isomerase that catalyzes the conversion of deoxy-ribose 1-phosphate (dRib-1-P) and ribose 1-phosphate (Rib-1-P) to deoxy-ribose 5-phosphate (dRib-5-P) and ribose 5-phosphate (Rib-5-P), respectively. This chain is Phosphopentomutase, found in Methylobacterium radiotolerans (strain ATCC 27329 / DSM 1819 / JCM 2831 / NBRC 15690 / NCIMB 10815 / 0-1).